The sequence spans 392 residues: Probable tRNA sulfurtransferase (392 aa).

The region spanning 59-167 is the THUMP domain; it reads ADITDRVKKV…DQAFVFSNKI (109 aa). ATP-binding positions include 184–185, 209–210, arginine 266, glycine 288, and glutamine 297; these read LL and HF.

It belongs to the ThiI family.

It is found in the cytoplasm. The catalysed reaction is [ThiI sulfur-carrier protein]-S-sulfanyl-L-cysteine + a uridine in tRNA + 2 reduced [2Fe-2S]-[ferredoxin] + ATP + H(+) = [ThiI sulfur-carrier protein]-L-cysteine + a 4-thiouridine in tRNA + 2 oxidized [2Fe-2S]-[ferredoxin] + AMP + diphosphate. It carries out the reaction [ThiS sulfur-carrier protein]-C-terminal Gly-Gly-AMP + S-sulfanyl-L-cysteinyl-[cysteine desulfurase] + AH2 = [ThiS sulfur-carrier protein]-C-terminal-Gly-aminoethanethioate + L-cysteinyl-[cysteine desulfurase] + A + AMP + 2 H(+). It participates in cofactor biosynthesis; thiamine diphosphate biosynthesis. In terms of biological role, catalyzes the ATP-dependent transfer of a sulfur to tRNA to produce 4-thiouridine in position 8 of tRNAs, which functions as a near-UV photosensor. Also catalyzes the transfer of sulfur to the sulfur carrier protein ThiS, forming ThiS-thiocarboxylate. This is a step in the synthesis of thiazole, in the thiamine biosynthesis pathway. The sulfur is donated as persulfide by IscS. The polypeptide is Probable tRNA sulfurtransferase (Alkaliphilus oremlandii (strain OhILAs) (Clostridium oremlandii (strain OhILAs))).